A 265-amino-acid chain; its full sequence is Thiazole synthase (265 aa).

Lysine 106 serves as the catalytic Schiff-base intermediate with DXP. 1-deoxy-D-xylulose 5-phosphate-binding positions include glycine 167, 193 to 194 (AG), and 215 to 216 (NS).

Belongs to the ThiG family. As to quaternary structure, homotetramer. Forms heterodimers with either ThiH or ThiS.

The protein localises to the cytoplasm. The catalysed reaction is [ThiS sulfur-carrier protein]-C-terminal-Gly-aminoethanethioate + 2-iminoacetate + 1-deoxy-D-xylulose 5-phosphate = [ThiS sulfur-carrier protein]-C-terminal Gly-Gly + 2-[(2R,5Z)-2-carboxy-4-methylthiazol-5(2H)-ylidene]ethyl phosphate + 2 H2O + H(+). The protein operates within cofactor biosynthesis; thiamine diphosphate biosynthesis. In terms of biological role, catalyzes the rearrangement of 1-deoxy-D-xylulose 5-phosphate (DXP) to produce the thiazole phosphate moiety of thiamine. Sulfur is provided by the thiocarboxylate moiety of the carrier protein ThiS. In vitro, sulfur can be provided by H(2)S. The protein is Thiazole synthase of Prochlorococcus marinus (strain MIT 9515).